The sequence spans 138 residues: Type II secretion system protein I (138 aa).

Positions 1-6 (MKHQRG) are cleaved as a propeptide — leader sequence. Y7 bears the N-methyltyrosine mark. The chain crosses the membrane as a helical span at residues 7–29 (YSLIEVIVAFALLALALTLLLGS).

This sequence belongs to the GSP I family. In terms of assembly, type II secretion is composed of four main components: the outer membrane complex, the inner membrane complex, the cytoplasmic secretion ATPase and the periplasm-spanning pseudopilus. Interacts with core component XpsG. Cleaved by prepilin peptidase. Post-translationally, methylated by prepilin peptidase at the amino group of the N-terminal tyrosine once the leader sequence is cleaved by prepilin peptidase.

The protein resides in the cell inner membrane. Functionally, component of the type II secretion system required for the energy-dependent secretion of extracellular factors such as proteases and toxins from the periplasm. Part of the pseudopilus tip complex that is critical for the recognition and binding of secretion substrates. The sequence is that of Type II secretion system protein I (xpsI) from Xanthomonas campestris pv. campestris (strain ATCC 33913 / DSM 3586 / NCPPB 528 / LMG 568 / P 25).